A 662-amino-acid polypeptide reads, in one-letter code: A-kinase anchor protein 10, mitochondrial (662 aa).

The N-terminal 28 residues, 1 to 28 (MRGAGPSPRHSPRALRPDPGPAMSFFRR), are a transit peptide targeting the mitochondrion. 3 disordered regions span residues 1–55 (MRGA…SPQK), 178–205 (KQSS…ALDR), and 242–280 (GHSA…NSCS). Residues 32 to 43 (GKEQEKTLDVKS) are compositionally biased toward basic and acidic residues. 2 positions are modified to phosphoserine: serine 52 and serine 189. RGS domains lie at 125–369 (TLEQ…CKYQ) and 379–505 (YLAD…YKYL). Over residues 256–280 (GSHQIPTDSQDSSSRLAVGSRNSCS) the composition is skewed to polar residues. Serine 281 is modified (phosphoserine). The tract at residues 634-647 (LAWKIAKMIVSDVM) is PKA-RII subunit binding.

As to expression, highly expressed in testis, kidney and lung, followed by brain, skeletal muscle, liver, spleen and heart. Also expressed in brown adipose tissue and pancreas.

It is found in the mitochondrion. The protein localises to the membrane. Its subcellular location is the cytoplasm. Differentially targeted protein that binds to type I and II regulatory subunits of protein kinase A and anchors them to the mitochondria or the plasma membrane. Although the physiological relevance between PKA and AKAPS with mitochondria is not fully understood, one idea is that BAD, a proapoptotic member, is phosphorylated and inactivated by mitochondria-anchored PKA. It cannot be excluded too that it may facilitate PKA as well as G protein signal transduction, by acting as an adapter for assembling multiprotein complexes. With its RGS domain, it could lead to the interaction to G-alpha proteins, providing a link between the signaling machinery and the downstream kinase. The protein is A-kinase anchor protein 10, mitochondrial (Akap10) of Mus musculus (Mouse).